Reading from the N-terminus, the 147-residue chain is Putative toxin MJ0142 (147 aa).

The protein belongs to the UPF0332 family.

Functionally, putative toxin component of a putative type VII toxin-antitoxin (TA) system. Its cognate antitoxin might be MJ0141. This is Putative toxin MJ0142 from Methanocaldococcus jannaschii (strain ATCC 43067 / DSM 2661 / JAL-1 / JCM 10045 / NBRC 100440) (Methanococcus jannaschii).